We begin with the raw amino-acid sequence, 708 residues long: MEANHQRNDLGLVALTMLAQYHNISLNPEEIKHKFDLDGKGLSLTSWLLAAKSLALKAKHIKKEISRLHLVNLPALVWQDNGKHFLLVKVDTDNNRYLTYNLEQDAPQILSQDEFEACYQGQLILVTSRASVVGQLAKFDFTWFIPAVIKYRKIFLETLIVSIFLQIFALITPLFFQVVMDKVLVHRGFSTLNIITVALAIVIIFEIVLSGLRTYVFSHSTSRIDVELGAKLFRHLLSLPISYFENRRVGDTVARVRELDQIRNFLTGQALTSVLDLLFSFIFFAVMWYYSPKLTLVILGSLPCYILWSIFISPILRRRLDDKFARSADNQAFLVESVTAINMIKAMAVAPQMTDTWDKQLASYVSSSFRVTVLATIGQQGVQLIQKTVMVINLWLGAHLVISGDLSIGQLIAFNMLSGQVIAPVIRLAQLWQDFQQVGISVTRLGDVLNSPTEQYQGKLSLPEIKGDISFKNIRFRYKPDAPTILNNVNLEIRQGEVIGIVGRSGSGKSTLTKLLQRFYIPENGQVLIDGHDLALADPNWLRRQIGVVLQDNVLLNRSIRENIALSDPGMPMERVIYAAKLAGAHDFISELREGYNTIVGEQGAGLSGGQRQRIAIARALVNNPKILIFDEATSALDYQSEHIIMQNMQKICQGRTVILIAHRLSTVKNADRIIVMEKGEIVEQGKHHELLQNSNGLYSYLHQLQLN.

A Peptidase C39 domain is found at 1–126 (MEANHQRNDL…ACYQGQLILV (126 aa)). The ABC transmembrane type-1 domain maps to 155–437 (FLETLIVSIF…LAQLWQDFQQ (283 aa)). The next 5 helical transmembrane spans lie at 159 to 179 (LIVSIFLQIFALITPLFFQVV), 192 to 212 (LNIITVALAIVIIFEIVLSGL), 270 to 290 (ALTSVLDLLFSFIFFAVMWYY), 296 to 316 (LVILGSLPCYILWSIFISPIL), and 389 to 409 (VMVINLWLGAHLVISGDLSIG). The region spanning 469 to 704 (ISFKNIRFRY…SNGLYSYLHQ (236 aa)) is the ABC transporter domain. 503-510 (GRSGSGKS) contributes to the ATP binding site.

It belongs to the ABC transporter superfamily. Protein-1 exporter (TC 3.A.1.109) family. In terms of assembly, homodimer.

The protein localises to the cell inner membrane. The enzyme catalyses ATP + H2O + proteinSide 1 = ADP + phosphate + proteinSide 2.. Part of the ABC transporter complex LktBD involved in leukotoxin export. Transmembrane domains (TMD) form a pore in the inner membrane and the ATP-binding domain (NBD) is responsible for energy generation. The protein is Leukotoxin translocation ATP-binding protein LktB (lktB) of Mannheimia haemolytica (Pasteurella haemolytica).